The sequence spans 438 residues: 3-phosphoshikimate 1-carboxyvinyltransferase (438 aa).

Residues Lys-26, Ser-27, and Arg-31 each contribute to the 3-phosphoshikimate site. Lys-26 is a phosphoenolpyruvate binding site. Positions 99 and 127 each coordinate phosphoenolpyruvate. 3-phosphoshikimate-binding residues include Ser-172, Gln-174, Asp-320, and Lys-347. Gln-174 lines the phosphoenolpyruvate pocket. Asp-320 acts as the Proton acceptor in catalysis. Phosphoenolpyruvate-binding residues include Arg-351 and Arg-392.

The protein belongs to the EPSP synthase family. In terms of assembly, monomer.

The protein localises to the cytoplasm. The catalysed reaction is 3-phosphoshikimate + phosphoenolpyruvate = 5-O-(1-carboxyvinyl)-3-phosphoshikimate + phosphate. It participates in metabolic intermediate biosynthesis; chorismate biosynthesis; chorismate from D-erythrose 4-phosphate and phosphoenolpyruvate: step 6/7. Functionally, catalyzes the transfer of the enolpyruvyl moiety of phosphoenolpyruvate (PEP) to the 5-hydroxyl of shikimate-3-phosphate (S3P) to produce enolpyruvyl shikimate-3-phosphate and inorganic phosphate. The polypeptide is 3-phosphoshikimate 1-carboxyvinyltransferase (Xanthomonas campestris pv. campestris (strain 8004)).